A 306-amino-acid chain; its full sequence is Homoserine kinase (306 aa).

88 to 98 (PLARGLGSSAT) is a binding site for ATP.

It belongs to the GHMP kinase family. Homoserine kinase subfamily.

It is found in the cytoplasm. The enzyme catalyses L-homoserine + ATP = O-phospho-L-homoserine + ADP + H(+). The protein operates within amino-acid biosynthesis; L-threonine biosynthesis; L-threonine from L-aspartate: step 4/5. Catalyzes the ATP-dependent phosphorylation of L-homoserine to L-homoserine phosphate. The sequence is that of Homoserine kinase from Synechococcus sp. (strain ATCC 27144 / PCC 6301 / SAUG 1402/1) (Anacystis nidulans).